Consider the following 180-residue polypeptide: Cytokinin-beta-glucosidase 2 (180 aa).

Its function is as follows. Hydrolyzes cytokinin glucosides thus liberating free cytokinins. The sequence is that of Cytokinin-beta-glucosidase 2 (ROLC2) from Panax ginseng (Korean ginseng).